A 748-amino-acid polypeptide reads, in one-letter code: Semaphorin-3B (748 aa).

Positions Met1 to Ala25 are cleaved as a signal peptide. In terms of domain architecture, Sema spans Arg30 to Leu512. A glycan (N-linked (GlcNAc...) asparagine) is linked at Asn82. A disulfide bridge connects residues Cys102 and Cys113. An N-linked (GlcNAc...) asparagine glycan is attached at Asn124. 5 disulfide bridges follow: Cys131–Cys140, Cys268–Cys379, Cys292–Cys339, Cys515–Cys533, and Cys643–Cys709. In terms of domain architecture, Ig-like C2-type spans Pro561–Leu659. Residues Met708–Trp748 are disordered. The span at His732 to Pro742 shows a compositional bias: basic and acidic residues.

The protein belongs to the semaphorin family.

The protein localises to the secreted. In terms of biological role, inhibits axonal extension by providing local signals to specify territories inaccessible for growing axons. This is Semaphorin-3B (Sema3b) from Mus musculus (Mouse).